Consider the following 299-residue polypeptide: MKTNSEELTVFVQVVESGSFSRAAEQLAMANSAVSRIVKRLEEKLGVNLLNRTTRQLSLTEEGAQYFRRAQRILQEMAAAETEMLAVHEIPQGVLRVDSAMPMVLHLLAPLATKFNERYPHIRLSLVSSEGYINLIERKVDIALRAGELDDSGLRARHLFDSRFRVIASPEYLAKHGTPQSAEELAGHQCLGFTEPGSLNTWAVLDAQGNPYKISPHFTASSGEILRSLCLSGCGIACLSDFLVDNDIAEGKLIPLLAEQTSDKTHPFNAVYYSDKAVNLRLRVFLDFLVEELGNNLCG.

An HTH lysR-type domain is found at 1-60 (MKTNSEELTVFVQVVESGSFSRAAEQLAMANSAVSRIVKRLEEKLGVNLLNRTTRQLSLT). The H-T-H motif DNA-binding region spans 20–39 (FSRAAEQLAMANSAVSRIVK).

It belongs to the LysR transcriptional regulatory family. In terms of assembly, forms oligomers. Oligomerization is required for DNA binding.

Involved in the regulation of bacterial adhesion to host epithelial cells. May play a central regulatory role in meningococcal adhesion, particularly in switching from initial adhesion to intimate adhesion by downregulating the bacterial surface structures that hinder this adhesion. During intimate adhesion, negatively regulates the expression of pilC1, encoding a pilus-associated protein, pilE, encoding the pilin, and sia genes, encoding the capsule. Also negatively regulates its own expression. May also regulate other genes that are involved in intimate adhesion. Binds specifically to the promoter region of pilC1 and crgA (both harboring a CREN element), and pilE and sia (both devoid of a CREN element). Acts through interaction with RNA polymerase (RNAP). Interaction with RNAP leads to the production of short abortive transcripts, suggesting that CrgA may act by preventing RNAP from clearing the promoter. The protein is HTH-type transcriptional regulator CrgA of Neisseria meningitidis serogroup C (strain 8013).